Here is a 542-residue protein sequence, read N- to C-terminus: Probable E3 ubiquitin-protein ligase ARI11 (542 aa).

The disordered stretch occupies residues 1-25; the sequence is MSSSDRDIIDIESGEEDLYSDGGND. The segment covering 10-19 has biased composition (acidic residues); sequence DIESGEEDLY. Positions 135-342 are TRIAD supradomain; it reads VDIQCGICFE…SDHKACNAFK (208 aa). The Zn(2+) site is built by cysteine 139, cysteine 142, cysteine 156, histidine 158, cysteine 161, cysteine 164, cysteine 184, cysteine 189, cysteine 228, cysteine 233, cysteine 251, cysteine 253, cysteine 258, cysteine 261, histidine 266, cysteine 271, cysteine 298, and cysteine 301. The RING-type 1 zinc finger occupies 139 to 189; sequence CGICFESYTRKEIARVSCGHPYCKTCWTGYITTKIEDGPGCLRVKCPEPSC. The segment at 208-271 adopts an IBR-type zinc-finger fold; sequence DKYYRYFLRS…CEDAHSPVDC (64 aa). The segment at 298-328 adopts an RING-type 2; atypical zinc-finger fold; sequence CPKCKRPIEKNTGCNHMSCSAPCRHYFCWAC. The active site involves cysteine 311. 6 residues coordinate Zn(2+): cysteine 316, cysteine 320, cysteine 325, cysteine 328, histidine 335, and cysteine 338.

It belongs to the RBR family. Ariadne subfamily. It depends on Zn(2+) as a cofactor.

It catalyses the reaction [E2 ubiquitin-conjugating enzyme]-S-ubiquitinyl-L-cysteine + [acceptor protein]-L-lysine = [E2 ubiquitin-conjugating enzyme]-L-cysteine + [acceptor protein]-N(6)-ubiquitinyl-L-lysine.. The protein operates within protein modification; protein ubiquitination. Functionally, might act as an E3 ubiquitin-protein ligase, or as part of E3 complex, which accepts ubiquitin from specific E2 ubiquitin-conjugating enzymes and then transfers it to substrates. This is Probable E3 ubiquitin-protein ligase ARI11 (ARI11) from Arabidopsis thaliana (Mouse-ear cress).